Consider the following 127-residue polypeptide: Large ribosomal subunit protein bL12 (127 aa).

The protein belongs to the bacterial ribosomal protein bL12 family. Homodimer. Part of the ribosomal stalk of the 50S ribosomal subunit. Forms a multimeric L10(L12)X complex, where L10 forms an elongated spine to which 2 to 4 L12 dimers bind in a sequential fashion. Binds GTP-bound translation factors.

Functionally, forms part of the ribosomal stalk which helps the ribosome interact with GTP-bound translation factors. Is thus essential for accurate translation. The protein is Large ribosomal subunit protein bL12 of Syntrophobacter fumaroxidans (strain DSM 10017 / MPOB).